The primary structure comprises 119 residues: MPRVKRGVTARASHKKILDAAKGYRGRRKNVFRVANEAVMKAGQYQYRDRRQRKRQFRALWIARINAAARQHGLTYSVFMNGLSRAEIGVDRKVLSDIAIFDKDAFAKIVDQVKAKLAA.

It belongs to the bacterial ribosomal protein bL20 family.

Binds directly to 23S ribosomal RNA and is necessary for the in vitro assembly process of the 50S ribosomal subunit. It is not involved in the protein synthesizing functions of that subunit. In Thiobacillus denitrificans (strain ATCC 25259 / T1), this protein is Large ribosomal subunit protein bL20.